A 267-amino-acid chain; its full sequence is Regulatory protein RecX (267 aa).

Belongs to the RecX family.

Its subcellular location is the cytoplasm. Functionally, modulates RecA activity. The sequence is that of Regulatory protein RecX from Leuconostoc mesenteroides subsp. mesenteroides (strain ATCC 8293 / DSM 20343 / BCRC 11652 / CCM 1803 / JCM 6124 / NCDO 523 / NBRC 100496 / NCIMB 8023 / NCTC 12954 / NRRL B-1118 / 37Y).